A 214-amino-acid chain; its full sequence is Adenylate kinase (214 aa).

10-15 contributes to the ATP binding site; it reads GAGKGT. The interval 30 to 59 is NMP; sequence CTGDMLRAAVKAGSELGLKAKEIMDAGKLV. AMP-binding positions include Thr-31, Arg-36, 57 to 59, 85 to 88, and Gln-92; these read KLV and GFPR. Residues 122–159 are LID; sequence GRRVHAASGRVYHIKFNPPKVEDKDDVTGEELTIRKDD. Residues Arg-123 and 132–133 contribute to the ATP site; that span reads VY. Arg-156 and Arg-167 together coordinate AMP. Position 200 (Arg-200) interacts with ATP.

This sequence belongs to the adenylate kinase family. As to quaternary structure, monomer.

The protein resides in the cytoplasm. It carries out the reaction AMP + ATP = 2 ADP. The protein operates within purine metabolism; AMP biosynthesis via salvage pathway; AMP from ADP: step 1/1. In terms of biological role, catalyzes the reversible transfer of the terminal phosphate group between ATP and AMP. Plays an important role in cellular energy homeostasis and in adenine nucleotide metabolism. This is Adenylate kinase from Yersinia enterocolitica.